A 462-amino-acid polypeptide reads, in one-letter code: Argininosuccinate lyase (462 aa).

Belongs to the lyase 1 family. Argininosuccinate lyase subfamily.

The protein resides in the cytoplasm. It carries out the reaction 2-(N(omega)-L-arginino)succinate = fumarate + L-arginine. It functions in the pathway amino-acid biosynthesis; L-arginine biosynthesis; L-arginine from L-ornithine and carbamoyl phosphate: step 3/3. The sequence is that of Argininosuccinate lyase from Prochlorococcus marinus (strain SARG / CCMP1375 / SS120).